We begin with the raw amino-acid sequence, 630 residues long: 1-deoxy-D-xylulose-5-phosphate synthase (630 aa).

Residues His-72 and 113–115 (GHS) each bind thiamine diphosphate. Asp-144 contacts Mg(2+). Residues 145–146 (GA), Asn-173, Tyr-284, and Glu-367 each bind thiamine diphosphate. Asn-173 provides a ligand contact to Mg(2+).

This sequence belongs to the transketolase family. DXPS subfamily. As to quaternary structure, homodimer. Mg(2+) serves as cofactor. Requires thiamine diphosphate as cofactor.

It catalyses the reaction D-glyceraldehyde 3-phosphate + pyruvate + H(+) = 1-deoxy-D-xylulose 5-phosphate + CO2. The protein operates within metabolic intermediate biosynthesis; 1-deoxy-D-xylulose 5-phosphate biosynthesis; 1-deoxy-D-xylulose 5-phosphate from D-glyceraldehyde 3-phosphate and pyruvate: step 1/1. In terms of biological role, catalyzes the acyloin condensation reaction between C atoms 2 and 3 of pyruvate and glyceraldehyde 3-phosphate to yield 1-deoxy-D-xylulose-5-phosphate (DXP). The chain is 1-deoxy-D-xylulose-5-phosphate synthase from Bacillus cereus (strain G9842).